A 369-amino-acid polypeptide reads, in one-letter code: Protein FAM187B (369 aa).

The signal sequence occupies residues 1–17 (MPPMLWLLLNFAAPALG). The Extracellular segment spans residues 18-333 (FYFSISCPSG…PGRADSVLKG (316 aa)). 3 N-linked (GlcNAc...) asparagine glycosylation sites follow: N45, N68, and N130. A helical transmembrane segment spans residues 334-354 (LKLVLLVGTVLVLLGALLKFI). The Cytoplasmic portion of the chain corresponds to 355-369 (RPSPGKRSKQVLMVK).

It belongs to the FAM187 family.

Its subcellular location is the membrane. The protein is Protein FAM187B (FAM187B) of Macaca fascicularis (Crab-eating macaque).